A 330-amino-acid polypeptide reads, in one-letter code: Poly(3-hydroxyalkanoate) polymerase subunit PhaE (330 aa).

A coiled-coil region spans residues 298 to 328; sequence RSEVDEIHQTIYQLRKEVKSLKKRLGETEAN.

This sequence belongs to the PHA/PHB synthase family. Type III PhaE subfamily. Forms a heterodimer with PhaC, which may multimerize in the presence of 3-hydroxybutyryl-CoA. Both subunits are required for PHB synthesis in E.coli and in PHA-negative A.eutrophus.

Its subcellular location is the cytoplasm. It participates in biopolymer metabolism; poly-(R)-3-hydroxybutanoate biosynthesis. When expressed in E.coli with Synechocystis PhaC and C.necator PhaA and PhaB, confers the ability to synthesize up to 13% (w/w) poly(3-hydroxybutyrate) (PHB) depending on the carbon source; all 4 genes are necessary for PHB production. Cell-free in vitro coexpression with PhaE gives a heterodimer able to polymerize 3-hydroxybutyrate-CoA. This subunit has no catalytic activity but enhances the activity of PhaC, the catalytic subunit. This chain is Poly(3-hydroxyalkanoate) polymerase subunit PhaE, found in Synechocystis sp. (strain ATCC 27184 / PCC 6803 / Kazusa).